The following is a 216-amino-acid chain: ATP-dependent dethiobiotin synthetase BioD (216 aa).

Residue 13-18 (EVGKTY) participates in ATP binding. Thr-17 contributes to the Mg(2+) binding site. The active site involves Lys-38. Thr-42 is a binding site for substrate. Residues Asp-47 and 112-115 (EGVG) contribute to the ATP site. 2 residues coordinate Mg(2+): Asp-47 and Glu-112.

Belongs to the dethiobiotin synthetase family. As to quaternary structure, homodimer. Mg(2+) serves as cofactor.

The protein resides in the cytoplasm. The catalysed reaction is (7R,8S)-7,8-diammoniononanoate + CO2 + ATP = (4R,5S)-dethiobiotin + ADP + phosphate + 3 H(+). The protein operates within cofactor biosynthesis; biotin biosynthesis; biotin from 7,8-diaminononanoate: step 1/2. Functionally, catalyzes a mechanistically unusual reaction, the ATP-dependent insertion of CO2 between the N7 and N8 nitrogen atoms of 7,8-diaminopelargonic acid (DAPA, also called 7,8-diammoniononanoate) to form a ureido ring. The chain is ATP-dependent dethiobiotin synthetase BioD from Endomicrobium trichonymphae.